We begin with the raw amino-acid sequence, 377 residues long: Nitric oxide reductase FlRd-NAD(+) reductase (377 aa).

The protein belongs to the FAD-dependent oxidoreductase family. Requires FAD as cofactor.

Its subcellular location is the cytoplasm. It carries out the reaction 2 reduced [nitric oxide reductase rubredoxin domain] + NAD(+) + H(+) = 2 oxidized [nitric oxide reductase rubredoxin domain] + NADH. It functions in the pathway nitrogen metabolism; nitric oxide reduction. Functionally, one of at least two accessory proteins for anaerobic nitric oxide (NO) reductase. Reduces the rubredoxin moiety of NO reductase. The protein is Nitric oxide reductase FlRd-NAD(+) reductase of Shigella sonnei (strain Ss046).